Consider the following 85-residue polypeptide: RNA-binding protein Hfq (85 aa).

In terms of domain architecture, Sm spans 10–70 (DIFLNGARKN…ISTINPAKPL (61 aa)).

The protein belongs to the Hfq family. In terms of assembly, homohexamer.

Functionally, RNA chaperone that binds small regulatory RNA (sRNAs) and mRNAs to facilitate mRNA translational regulation in response to envelope stress, environmental stress and changes in metabolite concentrations. Also binds with high specificity to tRNAs. The polypeptide is RNA-binding protein Hfq (Clostridium botulinum (strain 657 / Type Ba4)).